Here is a 318-residue protein sequence, read N- to C-terminus: tRNA-cytidine(32) 2-sulfurtransferase (318 aa).

The PP-loop motif motif lies at 52 to 57 (SGGKDS). [4Fe-4S] cluster contacts are provided by Cys127, Cys130, and Cys218.

This sequence belongs to the TtcA family. In terms of assembly, homodimer. Mg(2+) serves as cofactor. It depends on [4Fe-4S] cluster as a cofactor.

It is found in the cytoplasm. The catalysed reaction is cytidine(32) in tRNA + S-sulfanyl-L-cysteinyl-[cysteine desulfurase] + AH2 + ATP = 2-thiocytidine(32) in tRNA + L-cysteinyl-[cysteine desulfurase] + A + AMP + diphosphate + H(+). The protein operates within tRNA modification. Its function is as follows. Catalyzes the ATP-dependent 2-thiolation of cytidine in position 32 of tRNA, to form 2-thiocytidine (s(2)C32). The sulfur atoms are provided by the cysteine/cysteine desulfurase (IscS) system. This chain is tRNA-cytidine(32) 2-sulfurtransferase, found in Actinobacillus pleuropneumoniae serotype 5b (strain L20).